The following is a 369-amino-acid chain: tRNA pseudouridine synthase D (369 aa).

The active-site Nucleophile is Asp-80. One can recognise a TRUD domain in the interval 156 to 318 (GIPNWFGEQR…LKQERRALRL (163 aa)).

This sequence belongs to the pseudouridine synthase TruD family.

It carries out the reaction uridine(13) in tRNA = pseudouridine(13) in tRNA. Responsible for synthesis of pseudouridine from uracil-13 in transfer RNAs. The polypeptide is tRNA pseudouridine synthase D (Xanthomonas axonopodis pv. citri (strain 306)).